Here is a 531-residue protein sequence, read N- to C-terminus: Transporter mfs1 (531 aa).

10 helical membrane-spanning segments follow: residues 83-103 (LVVTFDVCFLTFAVYMGSAIF), 119-139 (VPVILGLTLFVEGYAVGPLIF), 158-178 (LIVFICLQIPTALGSSLGVLL), 182-202 (FLAGVFGSPALSTGGASLADI), 214-234 (FWSLGAVGGPVLGPLLGAAMV), 241-261 (WQFWLLMMISALVLVIITFFM), 325-345 (IYIGLVYSILYLWFEAFPILF), 358-378 (LVYMGILVGSVLTVAFYFIYL), 398-418 (ILIISFPAAFFIPISLFWFGW), and 424-444 (VHWIVPIVGTLFYASGSFLLF). Residue Asn-486 is glycosylated (N-linked (GlcNAc...) asparagine). A helical transmembrane segment spans residues 496-516 (GWGSTILGVISCIMIPIPFLI).

Belongs to the major facilitator superfamily. CAR1 family.

The protein localises to the endoplasmic reticulum. It localises to the membrane. The sequence is that of Transporter mfs1 (mfs1) from Schizosaccharomyces pombe (strain 972 / ATCC 24843) (Fission yeast).